Here is a 386-residue protein sequence, read N- to C-terminus: Protein-glutamate methylesterase/protein-glutamine glutaminase (386 aa).

Positions 4–121 constitute a Response regulatory domain; that stretch reads KVLVVDDSAF…ARNRDEAVKT (118 aa). 4-aspartylphosphate is present on Asp-55. The disordered stretch occupies residues 133–161; it reads PVSRTSARASTPPPVAKQPERSSEPTTAL. Positions 190-384 constitute a CheB-type methylesterase domain; sequence INRAYQLLAI…KAIMKEVGYS (195 aa). Active-site residues include Ser-202, His-229, and Asp-326.

The protein belongs to the CheB family. Phosphorylated by CheA. Phosphorylation of the N-terminal regulatory domain activates the methylesterase activity.

The protein localises to the cytoplasm. It catalyses the reaction [protein]-L-glutamate 5-O-methyl ester + H2O = L-glutamyl-[protein] + methanol + H(+). It carries out the reaction L-glutaminyl-[protein] + H2O = L-glutamyl-[protein] + NH4(+). Functionally, involved in chemotaxis. Part of a chemotaxis signal transduction system that modulates chemotaxis in response to various stimuli. Catalyzes the demethylation of specific methylglutamate residues introduced into the chemoreceptors (methyl-accepting chemotaxis proteins or MCP) by CheR. Also mediates the irreversible deamidation of specific glutamine residues to glutamic acid. This is Protein-glutamate methylesterase/protein-glutamine glutaminase from Idiomarina loihiensis (strain ATCC BAA-735 / DSM 15497 / L2-TR).